The following is a 199-amino-acid chain: Large ribosomal subunit protein eL13B (199 aa).

T144 and T152 each carry phosphothreonine.

The protein belongs to the eukaryotic ribosomal protein eL13 family. As to quaternary structure, component of the large ribosomal subunit (LSU). Mature yeast ribosomes consist of a small (40S) and a large (60S) subunit. The 40S small subunit contains 1 molecule of ribosomal RNA (18S rRNA) and 33 different proteins (encoded by 57 genes). The large 60S subunit contains 3 rRNA molecules (25S, 5.8S and 5S rRNA) and 46 different proteins (encoded by 81 genes).

It localises to the cytoplasm. Functionally, component of the ribosome, a large ribonucleoprotein complex responsible for the synthesis of proteins in the cell. The small ribosomal subunit (SSU) binds messenger RNAs (mRNAs) and translates the encoded message by selecting cognate aminoacyl-transfer RNA (tRNA) molecules. The large subunit (LSU) contains the ribosomal catalytic site termed the peptidyl transferase center (PTC), which catalyzes the formation of peptide bonds, thereby polymerizing the amino acids delivered by tRNAs into a polypeptide chain. The nascent polypeptides leave the ribosome through a tunnel in the LSU and interact with protein factors that function in enzymatic processing, targeting, and the membrane insertion of nascent chains at the exit of the ribosomal tunnel. This Saccharomyces cerevisiae (strain ATCC 204508 / S288c) (Baker's yeast) protein is Large ribosomal subunit protein eL13B.